The following is a 120-amino-acid chain: C-C motif chemokine 16 (120 aa).

The signal sequence occupies residues 1–23 (MKVSEAALSLLVLILIITSASRS). Intrachain disulfides connect Cys-37/Cys-60 and Cys-38/Cys-76.

It belongs to the intercrine beta (chemokine CC) family. Mainly expressed in liver, also found in spleen and thymus. Highly expressed in LPS- and IFN-gamma-activated monocytes, weakly in some lymphocytes, including natural killer cells, gamma-delta T-cells, and some T-cell clones.

It is found in the secreted. In terms of biological role, shows chemotactic activity for lymphocytes and monocytes but not neutrophils. Also shows potent myelosuppressive activity, suppresses proliferation of myeloid progenitor cells. Recombinant SCYA16 shows chemotactic activity for monocytes and THP-1 monocytes, but not for resting lymphocytes and neutrophils. Induces a calcium flux in THP-1 cells that were desensitized by prior expression to RANTES. This is C-C motif chemokine 16 (CCL16) from Homo sapiens (Human).